The sequence spans 378 residues: Erythronate-4-phosphate dehydrogenase (378 aa).

Substrate contacts are provided by Ser-45 and Thr-66. NAD(+)-binding residues include Asp-146 and Thr-175. Arg-208 is an active-site residue. Asp-232 is a binding site for NAD(+). The active site involves Glu-237. The active-site Proton donor is His-254. Gly-257 is a binding site for NAD(+). Tyr-258 serves as a coordination point for substrate.

The protein belongs to the D-isomer specific 2-hydroxyacid dehydrogenase family. PdxB subfamily. Homodimer.

It is found in the cytoplasm. The enzyme catalyses 4-phospho-D-erythronate + NAD(+) = (R)-3-hydroxy-2-oxo-4-phosphooxybutanoate + NADH + H(+). Its pathway is cofactor biosynthesis; pyridoxine 5'-phosphate biosynthesis; pyridoxine 5'-phosphate from D-erythrose 4-phosphate: step 2/5. Catalyzes the oxidation of erythronate-4-phosphate to 3-hydroxy-2-oxo-4-phosphonooxybutanoate. The chain is Erythronate-4-phosphate dehydrogenase from Escherichia coli O17:K52:H18 (strain UMN026 / ExPEC).